A 225-amino-acid chain; its full sequence is Prolactin (225 aa).

A signal peptide spans 1–28; that stretch reads MTIQGSDRKGTLLLLVMSNLLFCQNVHP. A disulfide bridge links Cys32 with Cys37. Phosphoserine is present on residues Ser52 and Ser116. Cystine bridges form between Cys84–Cys200 and Cys217–Cys225.

This sequence belongs to the somatotropin/prolactin family. As to quaternary structure, interacts with PRLR.

It is found in the secreted. Its function is as follows. Prolactin acts primarily on the mammary gland by promoting lactation. The protein is Prolactin (PRL) of Alexandromys montebelli (Japanese grass vole).